The primary structure comprises 408 residues: Arginine biosynthesis bifunctional protein ArgJ (408 aa).

6 residues coordinate substrate: Thr158, Lys184, Thr195, Glu281, Asn403, and Thr408. Thr195 (nucleophile) is an active-site residue.

It belongs to the ArgJ family. As to quaternary structure, heterotetramer of two alpha and two beta chains.

The protein localises to the cytoplasm. The enzyme catalyses N(2)-acetyl-L-ornithine + L-glutamate = N-acetyl-L-glutamate + L-ornithine. It carries out the reaction L-glutamate + acetyl-CoA = N-acetyl-L-glutamate + CoA + H(+). It participates in amino-acid biosynthesis; L-arginine biosynthesis; L-ornithine and N-acetyl-L-glutamate from L-glutamate and N(2)-acetyl-L-ornithine (cyclic): step 1/1. It functions in the pathway amino-acid biosynthesis; L-arginine biosynthesis; N(2)-acetyl-L-ornithine from L-glutamate: step 1/4. In terms of biological role, catalyzes two activities which are involved in the cyclic version of arginine biosynthesis: the synthesis of N-acetylglutamate from glutamate and acetyl-CoA as the acetyl donor, and of ornithine by transacetylation between N(2)-acetylornithine and glutamate. This is Arginine biosynthesis bifunctional protein ArgJ from Bacillus cereus (strain ATCC 14579 / DSM 31 / CCUG 7414 / JCM 2152 / NBRC 15305 / NCIMB 9373 / NCTC 2599 / NRRL B-3711).